A 446-amino-acid polypeptide reads, in one-letter code: Mannosyltransferase KTR6 (446 aa).

Residues 1–8 are Cytoplasmic-facing; that stretch reads MHVLLSKK. The chain crosses the membrane as a helical; Signal-anchor for type II membrane protein span at residues 9–29; the sequence is IARFLLISFVFVLALMVTINH. The tract at residues 30 to 114 is stem region; that stretch reads PKTKQMSEQY…MVPSYINHRG (85 aa). Residues 30-446 are Lumenal-facing; the sequence is PKTKQMSEQY…DKPEGWDRLP (417 aa). Residues asparagine 82 and asparagine 98 are each glycosylated (N-linked (GlcNAc...) asparagine). The interval 115–446 is catalytic; it reads SPPKACFVSL…DKPEGWDRLP (332 aa). Glutamate 334 functions as the Nucleophile in the catalytic mechanism.

It belongs to the glycosyltransferase 15 family.

Its subcellular location is the membrane. It functions in the pathway protein modification; protein glycosylation. Its function is as follows. Glycosyltransferase that transfers an alpha-D-mannosyl residue from GDP-mannose into lipid-linked oligosaccharide, forming an alpha-(1-&gt;2)-D-mannosyl-D-mannose linkage. Required for addition of mannosylphosphate in yeast mannan. Recognizes any oligosaccharides with at least one alpha-1,2-linked mannobiose unit. In Saccharomyces cerevisiae (strain ATCC 204508 / S288c) (Baker's yeast), this protein is Mannosyltransferase KTR6 (KTR6).